A 309-amino-acid polypeptide reads, in one-letter code: D-alanine--D-alanine ligase (309 aa).

Residues 104 to 301 form the ATP-grasp domain; sequence KQIWQGSDLP…FDALCVEILA (198 aa). 130–185 is an ATP binding site; sequence VASLGLPVIIKPVHEGSSIGMSKVEKIEDFAPAIEKATAHDAIVMAEKWITGREYT. 3 residues coordinate Mg(2+): Asp-255, Glu-268, and Asn-270.

The protein belongs to the D-alanine--D-alanine ligase family. It depends on Mg(2+) as a cofactor. Requires Mn(2+) as cofactor.

The protein localises to the cytoplasm. The catalysed reaction is 2 D-alanine + ATP = D-alanyl-D-alanine + ADP + phosphate + H(+). The protein operates within cell wall biogenesis; peptidoglycan biosynthesis. Its function is as follows. Cell wall formation. The protein is D-alanine--D-alanine ligase of Acinetobacter baylyi (strain ATCC 33305 / BD413 / ADP1).